The chain runs to 205 residues: Cytochrome c biogenesis ATP-binding export protein CcmA 2 (205 aa).

One can recognise an ABC transporter domain in the interval L2 to L205. G34–T41 contacts ATP.

It belongs to the ABC transporter superfamily. CcmA exporter (TC 3.A.1.107) family. As to quaternary structure, the complex is composed of two ATP-binding proteins (CcmA) and two transmembrane proteins (CcmB).

Its subcellular location is the cell inner membrane. The catalysed reaction is heme b(in) + ATP + H2O = heme b(out) + ADP + phosphate + H(+). Its function is as follows. Part of the ABC transporter complex CcmAB involved in the biogenesis of c-type cytochromes; once thought to export heme, this seems not to be the case, but its exact role is uncertain. Responsible for energy coupling to the transport system. The sequence is that of Cytochrome c biogenesis ATP-binding export protein CcmA 2 from Salmonella typhimurium (strain LT2 / SGSC1412 / ATCC 700720).